The primary structure comprises 147 residues: Hemoglobin subunit delta (147 aa).

The Globin domain occupies 3-147 (HLTPEEKAAV…VATALAHKYH (145 aa)). H64 and H93 together coordinate heme b.

Belongs to the globin family. In terms of assembly, heterotetramer of two delta chains and two alpha chains. As to expression, red blood cells.

This is Hemoglobin subunit delta (HBD) from Ateles geoffroyi (Black-handed spider monkey).